The primary structure comprises 316 residues: MLSESSSFLKGVMLGSIFCALITMLGHIRIGNRMHHHEHHHLQAPNKDDILKISETERMELSKSFQVYCIVLVKPKDVSLWAAVKETWTKHCDKAEFFSSENVKVFESINMDTNDMWLMMRKAYKYAYDKYKDQYNWFFLARPTTFAVIENLKYFLLRKDPSQPFYLGHTVKSGDLEYVSVDGGIVLSIESMKRLNGLLSVPEKCPEQGGMIWKISEDKQLAVCLKYAGVFAENAEDADGKDVFNTKSVGLFIKEAMTNQPNQVVEGCCSDMAVTFNGLTPNQMHVMMYGVYRLRAFGHVFNDALVFLPPNGSEND.

Residues 1-6 lie on the Cytoplasmic side of the membrane; the sequence is MLSESS. Residues 7–26 form a helical; Signal-anchor for type II membrane protein membrane-spanning segment; it reads SFLKGVMLGSIFCALITMLG. Over 27–316 the chain is Lumenal; the sequence is HIRIGNRMHH…FLPPNGSEND (290 aa).

Belongs to the glycosyltransferase 31 family. Beta3-Gal-T subfamily. As to quaternary structure, associates with core 1 beta-3-galactosyltransferase (C1GALT1), probably not with the soluble active form.

The protein resides in the membrane. Its function is as follows. Probable chaperone required for the generation of 1 O-glycan Gal-beta1-3GalNAc-alpha1-Ser/Thr (T antigen), which is a precursor for many extended O-glycans in glycoproteins. Probably acts as a specific molecular chaperone assisting the folding/stability of core 1 beta-3-galactosyltransferase (C1GALT1). The sequence is that of C1GALT1-specific chaperone 1 (C1galt1c1) from Rattus norvegicus (Rat).